The sequence spans 451 residues: Uronate isomerase (451 aa).

The protein belongs to the metallo-dependent hydrolases superfamily. Uronate isomerase family.

The enzyme catalyses D-glucuronate = D-fructuronate. The catalysed reaction is aldehydo-D-galacturonate = keto-D-tagaturonate. Its pathway is carbohydrate metabolism; pentose and glucuronate interconversion. This chain is Uronate isomerase, found in Thermotoga neapolitana (strain ATCC 49049 / DSM 4359 / NBRC 107923 / NS-E).